The following is a 187-amino-acid chain: Inosine triphosphate pyrophosphatase (187 aa).

T11 to K16 is a binding site for ITP. E39 contributes to the Mg(2+) binding site. Residues K51, D67 to T68, K84, F143 to D146, K164, and H169 to R170 contribute to the ITP site.

It belongs to the HAM1 NTPase family. As to quaternary structure, homodimer. Requires Mg(2+) as cofactor. Mn(2+) is required as a cofactor.

Its subcellular location is the cytoplasm. It is found in the nucleus. The catalysed reaction is ITP + H2O = IMP + diphosphate + H(+). It catalyses the reaction dITP + H2O = dIMP + diphosphate + H(+). The enzyme catalyses XTP + H2O = XMP + diphosphate + H(+). Functionally, pyrophosphatase that hydrolyzes non-canonical purine nucleotides such as inosine triphosphate (ITP), deoxyinosine triphosphate (dITP) or xanthosine 5'-triphosphate (XTP) to their respective monophosphate derivatives. The enzyme does not distinguish between the deoxy- and ribose forms. Probably excludes non-canonical purines from RNA and DNA precursor pools, thus preventing their incorporation into RNA and DNA and avoiding chromosomal lesions. This Aspergillus fumigatus (strain ATCC MYA-4609 / CBS 101355 / FGSC A1100 / Af293) (Neosartorya fumigata) protein is Inosine triphosphate pyrophosphatase.